Here is a 275-residue protein sequence, read N- to C-terminus: Ribosomal RNA small subunit methyltransferase A (275 aa).

Residues Asn21, Leu23, Gly48, Glu69, Asp94, and Asn115 each coordinate S-adenosyl-L-methionine.

Belongs to the class I-like SAM-binding methyltransferase superfamily. rRNA adenine N(6)-methyltransferase family. RsmA subfamily.

The protein localises to the cytoplasm. The catalysed reaction is adenosine(1518)/adenosine(1519) in 16S rRNA + 4 S-adenosyl-L-methionine = N(6)-dimethyladenosine(1518)/N(6)-dimethyladenosine(1519) in 16S rRNA + 4 S-adenosyl-L-homocysteine + 4 H(+). Specifically dimethylates two adjacent adenosines (A1518 and A1519) in the loop of a conserved hairpin near the 3'-end of 16S rRNA in the 30S particle. May play a critical role in biogenesis of 30S subunits. This is Ribosomal RNA small subunit methyltransferase A from Clostridium botulinum (strain Langeland / NCTC 10281 / Type F).